We begin with the raw amino-acid sequence, 439 residues long: MGKTFIVRAQYLLTMNKKDEVIENGALVVEDGRIKDVGEFTEILKKYKDPSIPVYGNSYSALMPGFINTHTHAAMVLFRGIADDLPLKQWLTEHIWPKEAKFLSPEFVHDGTSLACIEMLKSGTTTFNDMYFFTEAIAQAAKKLGIRAVVGQGVLDFPTASGKGADDYLAKAKEFIEKYKSDELILPAVAPHAIYTCSRETLLKSKELALKNNVPIHIHLSETFHEVEECLKNNGKRPVKYLKNIGFLEGRITAAHSVWLDDEEIDIMAERNIGVSHCIESNLKLSSGIAPVAKMIKKGVKVSMGTDGAASNNNLDLLEEISIAAKVQKGITADPTVLDVKTCMKMLTIWAAESLGVEKEIGSIETGKRADLVLMNLRKPHLQPVYDIYSTIIYSAKASDIEDVFVNGILVILNGRHQFIDEDELIDKAIWWAERIRNS.

The Zn(2+) site is built by His70 and His72. Substrate contacts are provided by Glu99 and His192. His219 is a binding site for Zn(2+). Glu222 and Asp307 together coordinate substrate. Asp307 contributes to the Zn(2+) binding site.

Belongs to the metallo-dependent hydrolases superfamily. MTA/SAH deaminase family. It depends on Zn(2+) as a cofactor.

It catalyses the reaction S-adenosyl-L-homocysteine + H2O + H(+) = S-inosyl-L-homocysteine + NH4(+). It carries out the reaction S-methyl-5'-thioadenosine + H2O + H(+) = S-methyl-5'-thioinosine + NH4(+). Its function is as follows. Catalyzes the deamination of 5-methylthioadenosine and S-adenosyl-L-homocysteine into 5-methylthioinosine and S-inosyl-L-homocysteine, respectively. Is also able to deaminate adenosine. This chain is 5-methylthioadenosine/S-adenosylhomocysteine deaminase, found in Thermodesulfovibrio yellowstonii (strain ATCC 51303 / DSM 11347 / YP87).